Here is a 365-residue protein sequence, read N- to C-terminus: 3-dehydroquinate synthase (365 aa).

NAD(+) is bound by residues 107-111, 131-132, K144, and K153; these read GVIGD and TT. Zn(2+) contacts are provided by E186, H251, and H268.

Belongs to the sugar phosphate cyclases superfamily. Dehydroquinate synthase family. The cofactor is Co(2+). It depends on Zn(2+) as a cofactor. Requires NAD(+) as cofactor.

The protein localises to the cytoplasm. The enzyme catalyses 7-phospho-2-dehydro-3-deoxy-D-arabino-heptonate = 3-dehydroquinate + phosphate. It participates in metabolic intermediate biosynthesis; chorismate biosynthesis; chorismate from D-erythrose 4-phosphate and phosphoenolpyruvate: step 2/7. Catalyzes the conversion of 3-deoxy-D-arabino-heptulosonate 7-phosphate (DAHP) to dehydroquinate (DHQ). The polypeptide is 3-dehydroquinate synthase (Picosynechococcus sp. (strain ATCC 27264 / PCC 7002 / PR-6) (Agmenellum quadruplicatum)).